We begin with the raw amino-acid sequence, 118 residues long: Large ribosomal subunit protein uL18 (118 aa).

Residues 1–24 (MISKPDKNKTRQRRHARVRGKISG) form a disordered region. The segment covering 10 to 20 (TRQRRHARVRG) has biased composition (basic residues).

The protein belongs to the universal ribosomal protein uL18 family. As to quaternary structure, part of the 50S ribosomal subunit; part of the 5S rRNA/L5/L18/L25 subcomplex. Contacts the 5S and 23S rRNAs.

This is one of the proteins that bind and probably mediate the attachment of the 5S RNA into the large ribosomal subunit, where it forms part of the central protuberance. This chain is Large ribosomal subunit protein uL18, found in Lactiplantibacillus plantarum (strain ATCC BAA-793 / NCIMB 8826 / WCFS1) (Lactobacillus plantarum).